The primary structure comprises 323 residues: Aldo-keto reductase family 1 member C1 (323 aa).

Residues 20 to 24 and aspartate 50 contribute to the NADP(+) site; that span reads GFGTY. Substrate is bound at residue tyrosine 24. The active-site Proton donor is tyrosine 55. Histidine 117 contributes to the substrate binding site. Residues 166 to 167, glutamine 190, and 216 to 222 contribute to the NADP(+) site; these read SN and YSALGSH. Substrate-binding residues include histidine 222 and tryptophan 227. Residue 270-280 participates in NADP(+) binding; the sequence is KSYNEQRIRQN.

The protein belongs to the aldo/keto reductase family. Monomer. Expressed in all tissues tested including liver, prostate, testis, adrenal gland, brain, uterus, mammary gland and keratinocytes. Highest levels found in liver, mammary gland and brain.

The protein resides in the cytoplasm. It localises to the cytosol. It carries out the reaction a 3alpha-hydroxysteroid + NADP(+) = a 3-oxosteroid + NADPH + H(+). It catalyses the reaction a 3alpha-hydroxysteroid + NAD(+) = a 3-oxosteroid + NADH + H(+). The catalysed reaction is (17R,20S)-17,20-dihydroxypregn-4-en-3-one + NADP(+) = 17alpha-hydroxyprogesterone + NADPH + H(+). The enzyme catalyses (17R,20S)-17,20-dihydroxypregn-4-en-3-one + NAD(+) = 17alpha-hydroxyprogesterone + NADH + H(+). It carries out the reaction (20S)-hydroxypregn-4-en-3-one + NADP(+) = progesterone + NADPH + H(+). It catalyses the reaction (20S)-hydroxypregn-4-en-3-one + NAD(+) = progesterone + NADH + H(+). The catalysed reaction is (1R,2R)-1,2-dihydrobenzene-1,2-diol + NADP(+) = catechol + NADPH + H(+). The enzyme catalyses (S)-indan-1-ol + NAD(+) = indan-1-one + NADH + H(+). It carries out the reaction (S)-indan-1-ol + NADP(+) = indan-1-one + NADPH + H(+). It catalyses the reaction 5alpha-androstane-3alpha,17beta-diol + NADP(+) = 17beta-hydroxy-5alpha-androstan-3-one + NADPH + H(+). The catalysed reaction is 5alpha-androstane-3beta,17beta-diol + NADP(+) = 17beta-hydroxy-5alpha-androstan-3-one + NADPH + H(+). The enzyme catalyses 5alpha-androstane-3alpha,17beta-diol + NAD(+) = 17beta-hydroxy-5alpha-androstan-3-one + NADH + H(+). It carries out the reaction 17beta-hydroxy-5alpha-androstan-3-one + NADP(+) = 5alpha-androstan-3,17-dione + NADPH + H(+). It catalyses the reaction androsterone + NADP(+) = 5alpha-androstan-3,17-dione + NADPH + H(+). The catalysed reaction is androsterone + NADPH + H(+) = 5alpha-androstane-3alpha,17beta-diol + NADP(+). The enzyme catalyses 5alpha-androstane-3alpha,17beta-diol + NAD(+) = androsterone + NADH + H(+). It carries out the reaction 17beta-estradiol + NADP(+) = estrone + NADPH + H(+). It catalyses the reaction 17beta-estradiol + NAD(+) = estrone + NADH + H(+). The catalysed reaction is testosterone + NADP(+) = androst-4-ene-3,17-dione + NADPH + H(+). The enzyme catalyses 20alpha-hydroxy-5beta-pregnan-3-one + NADP(+) = 5beta-pregnan-3,20-dione + NADPH + H(+). It carries out the reaction 3beta-hydroxy-5beta-pregnane-20-one + NADP(+) = 5beta-pregnan-3,20-dione + NADPH + H(+). It catalyses the reaction 3beta-hydroxy-5beta-pregnane-20-one + NADPH + H(+) = 3beta,20alpha-dihydroxy-5beta-pregnane + NADP(+). The catalysed reaction is (3beta,5alpha,17beta)-3-hydroxyandrostan-17-yl sulfate + NADP(+) = 5alpha-dihydrotestosterone sulfate + NADPH + H(+). Its pathway is steroid metabolism. Inhibited by hexestrol with an IC(50) of 9.5 uM, 1,10-phenanthroline with an IC(50) of 55 uM, 1,7-phenanthroline with an IC(50) of 72 uM, flufenamic acid with an IC(50) of 6.0 uM, indomethacin with an IC(50) of 140 uM, ibuprofen with an IC(50) of 950 uM, lithocholic acid with an IC(50) of 25 uM, ursodeoxycholic acid with an IC(50) of 340 uM and chenodeoxycholic acid with an IC(50) of 570 uM. The oxidation reaction is inhibited by low micromolar concentrations of NADPH. Its function is as follows. Cytosolic aldo-keto reductase that catalyzes the NADH and NADPH-dependent reduction of ketosteroids to hydroxysteroids. Most probably acts as a reductase in vivo since the oxidase activity measured in vitro is inhibited by physiological concentrations of NADPH. Displays a broad positional specificity acting on positions 3, 17 and 20 of steroids and regulates the metabolism of hormones like estrogens and androgens. May also reduce conjugated steroids such as 5alpha-dihydrotestosterone sulfate. Displays affinity for bile acids. The protein is Aldo-keto reductase family 1 member C1 (AKR1C1) of Homo sapiens (Human).